A 181-amino-acid chain; its full sequence is Crustacyanin-C1 subunit (181 aa).

Intrachain disulfides connect Cys-12–Cys-121, Cys-51–Cys-173, and Cys-117–Cys-150.

The protein belongs to the calycin superfamily. Lipocalin family. In terms of assembly, oligomer; Can form dimers (beta-crustacyanin); or complexes of 16 subunits (alpha-crustacyanin). There are five types of subunits: A1, A2, A3, C1 and C2. Found in the carapace.

The protein localises to the secreted. Its subcellular location is the extracellular space. Its function is as follows. Binds the carotenoid astaxanthin (AXT) which provides the blue coloration to the carapace of the lobster. The polypeptide is Crustacyanin-C1 subunit (Homarus gammarus (European lobster)).